The chain runs to 428 residues: Glutamine synthetase, chloroplastic (428 aa).

A chloroplast-targeting transit peptide spans 1 to 48 (MAQAVVPAMQCQVGAVRARPAAAAAAAGGRVWGVRRTGRGTSGFRVMA). In terms of domain architecture, GS beta-grasp spans 75 to 155 (IIAEYIWVGG…VMCDTYTPAG (81 aa)). Residues 95–120 (TISKPVEDPSELPKWNYDGSSTGQAP) are disordered. Residues 159 to 428 (PTNKRNRAAQ…LAAKKLALKV (270 aa)) enclose the GS catalytic domain.

Belongs to the glutamine synthetase family. Homooctamer.

Its subcellular location is the plastid. The protein resides in the chloroplast. The enzyme catalyses L-glutamate + NH4(+) + ATP = L-glutamine + ADP + phosphate + H(+). Light-modulated chloroplastic glutamine synthetase, encoded by a nuclear gene and expressed primarily in leaves, and which is responsible for the reassimilation of the ammonia generated by photorespiration. This Oryza sativa subsp. japonica (Rice) protein is Glutamine synthetase, chloroplastic.